The sequence spans 168 residues: uncharacterized protein (168 aa).

The helical transmembrane segment at 24–44 threads the bilayer; that stretch reads FIGIVLFLAVLIIGILILILF. Disordered regions lie at residues 69–92 and 142–168; these read SPSSSFLINNNNNNNNYHQNNNSN and NNNNNNNNNPPTNISNKLNKNGETKNI. The span at 142-157 shows a compositional bias: low complexity; it reads NNNNNNNNNPPTNISN.

It is found in the membrane. This is an uncharacterized protein from Dictyostelium discoideum (Social amoeba).